Consider the following 423-residue polypeptide: Putative competence-damage inducible protein (423 aa).

This sequence belongs to the CinA family.

The polypeptide is Putative competence-damage inducible protein (Streptococcus uberis (strain ATCC BAA-854 / 0140J)).